The chain runs to 568 residues: Periplasmic trehalase (568 aa).

The signal sequence occupies residues 1–39 (MPYATARSGDVMSSAAPPCCTSLLGLSLSMFVAPGTLTA). Substrate contacts are provided by residues Arg-169, 176 to 177 (WD), Asn-213, 222 to 224 (RSQ), 294 to 296 (RPE), and Gly-327. Active-site proton donor/acceptor residues include Asp-329 and Glu-511. Glu-526 lines the substrate pocket.

Belongs to the glycosyl hydrolase 37 family.

It is found in the periplasm. The enzyme catalyses alpha,alpha-trehalose + H2O = alpha-D-glucose + beta-D-glucose. Functionally, provides the cells with the ability to utilize trehalose at high osmolarity by splitting it into glucose molecules that can subsequently be taken up by the phosphotransferase-mediated uptake system. The polypeptide is Periplasmic trehalase (Xanthomonas axonopodis pv. citri (strain 306)).